We begin with the raw amino-acid sequence, 259 residues long: Ribosomal RNA small subunit methyltransferase J (259 aa).

Residues 101-102 (RD), 117-118 (ER), 153-154 (SS), and Asp176 contribute to the S-adenosyl-L-methionine site.

Belongs to the methyltransferase superfamily. RsmJ family.

It is found in the cytoplasm. It carries out the reaction guanosine(1516) in 16S rRNA + S-adenosyl-L-methionine = N(2)-methylguanosine(1516) in 16S rRNA + S-adenosyl-L-homocysteine + H(+). Its function is as follows. Specifically methylates the guanosine in position 1516 of 16S rRNA. The sequence is that of Ribosomal RNA small subunit methyltransferase J from Aliivibrio fischeri (strain MJ11) (Vibrio fischeri).